Here is a 244-residue protein sequence, read N- to C-terminus: L-xylulose reductase (244 aa).

Methionine 1 is modified (N-acetylmethionine). 11–39 (LVTGAGKGIGRSIVKALHAAGARVVAVSR) is an NADP(+) binding site. Arginine 21 carries the post-translational modification Omega-N-methylarginine. Position 46 is a phosphoserine (serine 46). Serine 136 lines the substrate pocket. The active-site Proton acceptor is the tyrosine 149. The active site involves lysine 153.

Belongs to the short-chain dehydrogenases/reductases (SDR) family. Homotetramer.

Its subcellular location is the membrane. It catalyses the reaction xylitol + NADP(+) = L-xylulose + NADPH + H(+). In terms of biological role, catalyzes the NADPH-dependent reduction of several pentoses, tetroses, trioses, alpha-dicarbonyl compounds and L-xylulose. Participates in the uronate cycle of glucose metabolism. May play a role in the water absorption and cellular osmoregulation in the proximal renal tubules by producing xylitol, an osmolyte, thereby preventing osmolytic stress from occurring in the renal tubules. This chain is L-xylulose reductase (DCXR), found in Bos taurus (Bovine).